The chain runs to 383 residues: S-adenosylmethionine synthase (383 aa).

His-15 serves as a coordination point for ATP. Asp-17 lines the Mg(2+) pocket. Residue Glu-43 participates in K(+) binding. Residues Glu-56 and Gln-99 each contribute to the L-methionine site. Residues 99 to 109 (QSPDINQGVDR) are flexible loop. Residues 164–166 (DAK), 230–231 (RF), Asp-239, 245–246 (RK), Ala-262, and Lys-266 contribute to the ATP site. Position 239 (Asp-239) interacts with L-methionine. Lys-270 is a binding site for L-methionine.

The protein belongs to the AdoMet synthase family. Homotetramer; dimer of dimers. The cofactor is Mg(2+). K(+) serves as cofactor.

The protein localises to the cytoplasm. It carries out the reaction L-methionine + ATP + H2O = S-adenosyl-L-methionine + phosphate + diphosphate. It functions in the pathway amino-acid biosynthesis; S-adenosyl-L-methionine biosynthesis; S-adenosyl-L-methionine from L-methionine: step 1/1. In terms of biological role, catalyzes the formation of S-adenosylmethionine (AdoMet) from methionine and ATP. The overall synthetic reaction is composed of two sequential steps, AdoMet formation and the subsequent tripolyphosphate hydrolysis which occurs prior to release of AdoMet from the enzyme. The chain is S-adenosylmethionine synthase from Shewanella oneidensis (strain ATCC 700550 / JCM 31522 / CIP 106686 / LMG 19005 / NCIMB 14063 / MR-1).